A 154-amino-acid polypeptide reads, in one-letter code: Small ribosomal subunit protein uS19 (154 aa).

This sequence belongs to the universal ribosomal protein uS19 family.

The protein is Small ribosomal subunit protein uS19 (RPS15) of Oryza sativa subsp. japonica (Rice).